A 322-amino-acid chain; its full sequence is N-acetyl-gamma-glutamyl-phosphate reductase (322 aa).

Residue Cys132 is part of the active site.

It belongs to the NAGSA dehydrogenase family. Type 1 subfamily.

It localises to the cytoplasm. The enzyme catalyses N-acetyl-L-glutamate 5-semialdehyde + phosphate + NADP(+) = N-acetyl-L-glutamyl 5-phosphate + NADPH + H(+). Its pathway is amino-acid biosynthesis; L-arginine biosynthesis; N(2)-acetyl-L-ornithine from L-glutamate: step 3/4. In terms of biological role, catalyzes the NADPH-dependent reduction of N-acetyl-5-glutamyl phosphate to yield N-acetyl-L-glutamate 5-semialdehyde. The polypeptide is N-acetyl-gamma-glutamyl-phosphate reductase (Bacteroides thetaiotaomicron (strain ATCC 29148 / DSM 2079 / JCM 5827 / CCUG 10774 / NCTC 10582 / VPI-5482 / E50)).